Consider the following 444-residue polypeptide: Nuclear envelope integral membrane protein 1 (444 aa).

The signal sequence occupies residues 1–43 (MAGGMKVAVSPAVGPGPWGSGVGGGGTVRLLLILSGCLVYGTA). Asparagine 125 carries N-linked (GlcNAc...) asparagine glycosylation. A run of 5 helical transmembrane segments spans residues 161–181 (PKLF…DLLS), 186–206 (FYYS…IIFI), 216–236 (PIYV…QLVF), 245–265 (CYWQ…FAVC), and 289–309 (LCFM…IIIA). Residues 186–297 (FYYSTGMSVG…GLCFMYSGIQ (112 aa)) form an a; required for its colocalization with lamins at the nuclear envelope region. The segment at 336–405 (PVPPRLLTEE…LTPNEVSVHE (70 aa)) is b; required for interaction with RAN-GTP. The interval 336-444 (PVPPRLLTEE…PAITQNNFLT (109 aa)) is required for nuclear localization. Residues serine 368, serine 424, and serine 425 each carry the phosphoserine modification.

The protein belongs to the NEMP family. In terms of assembly, homooligomer. Interacts with RAN-GTP. Interacts with EMD. Post-translationally, phosphorylation may regulate its interaction with RAN-GTP.

Its subcellular location is the nucleus inner membrane. The protein localises to the nucleus envelope. Functionally, together with EMD, contributes to nuclear envelope stiffness in germ cells. Required for female fertility. Essential for normal erythropoiesis. Required for efficient nuclear envelope opening and enucleation during the late stages of erythroblast maturation. The protein is Nuclear envelope integral membrane protein 1 (NEMP1) of Pongo abelii (Sumatran orangutan).